The following is a 202-amino-acid chain: Holliday junction branch migration complex subunit RuvA (202 aa).

The tract at residues 1-64 (MIDFLKGRLV…ETALEMFGFS (64 aa)) is domain I. Residues 65–143 (SELDRTAFLL…KQQVAVSAEL (79 aa)) are domain II. Residues 144–152 (PASDGVPVL) form a flexible linker region. A domain III region spans residues 152 to 202 (LAGRAENEALAALISLGYTPREAREALNRLPDRKLDAAGLVHAALRIMGSQ).

It belongs to the RuvA family. As to quaternary structure, homotetramer. Forms an RuvA(8)-RuvB(12)-Holliday junction (HJ) complex. HJ DNA is sandwiched between 2 RuvA tetramers; dsDNA enters through RuvA and exits via RuvB. An RuvB hexamer assembles on each DNA strand where it exits the tetramer. Each RuvB hexamer is contacted by two RuvA subunits (via domain III) on 2 adjacent RuvB subunits; this complex drives branch migration. In the full resolvosome a probable DNA-RuvA(4)-RuvB(12)-RuvC(2) complex forms which resolves the HJ.

It is found in the cytoplasm. In terms of biological role, the RuvA-RuvB-RuvC complex processes Holliday junction (HJ) DNA during genetic recombination and DNA repair, while the RuvA-RuvB complex plays an important role in the rescue of blocked DNA replication forks via replication fork reversal (RFR). RuvA specifically binds to HJ cruciform DNA, conferring on it an open structure. The RuvB hexamer acts as an ATP-dependent pump, pulling dsDNA into and through the RuvAB complex. HJ branch migration allows RuvC to scan DNA until it finds its consensus sequence, where it cleaves and resolves the cruciform DNA. The polypeptide is Holliday junction branch migration complex subunit RuvA (Desulforudis audaxviator (strain MP104C)).